We begin with the raw amino-acid sequence, 463 residues long: UDP-N-acetylmuramoylalanine--D-glutamate ligase (463 aa).

109 to 115 (GTDGKST) provides a ligand contact to ATP.

This sequence belongs to the MurCDEF family.

It localises to the cytoplasm. The catalysed reaction is UDP-N-acetyl-alpha-D-muramoyl-L-alanine + D-glutamate + ATP = UDP-N-acetyl-alpha-D-muramoyl-L-alanyl-D-glutamate + ADP + phosphate + H(+). It functions in the pathway cell wall biogenesis; peptidoglycan biosynthesis. Functionally, cell wall formation. Catalyzes the addition of glutamate to the nucleotide precursor UDP-N-acetylmuramoyl-L-alanine (UMA). The polypeptide is UDP-N-acetylmuramoylalanine--D-glutamate ligase (Leptospira interrogans serogroup Icterohaemorrhagiae serovar copenhageni (strain Fiocruz L1-130)).